The chain runs to 154 residues: Small ribosomal subunit protein eS10 (154 aa).

The interval 91-154 (ATMKKQASRP…ERSAPAPQQN (64 aa)) is disordered. The span at 124-135 (RGDRRQGGDRRG) shows a compositional bias: basic and acidic residues.

This sequence belongs to the eukaryotic ribosomal protein eS10 family.

The protein localises to the cytoplasm. This is Small ribosomal subunit protein eS10 (rps10) from Dictyostelium discoideum (Social amoeba).